We begin with the raw amino-acid sequence, 521 residues long: 3,4-dihydroxyphenylacetaldehyde synthase (521 aa).

Lysine 306 bears the N6-(pyridoxal phosphate)lysine mark.

Belongs to the group II decarboxylase family. Pyridoxal 5'-phosphate is required as a cofactor. In terms of tissue distribution, highly expressed in the cuticle and midgut. Low expression in the head and thorax.

The catalysed reaction is L-dopa + O2 + H2O + H(+) = 3,4-dihydroxyphenylacetaldehyde + H2O2 + NH4(+) + CO2. Its function is as follows. Catalyzes the decarboxylation-oxidative deamination of L-3,4-dihydroxyphenylalanine (L-DOPA) to 3,4-dihydroxylphenylacetaldehyde (DHPAA). Involved in cuticle development. Probably responsible for the protein cross-linking during the development of flexible cuticles. In Aedes aegypti (Yellowfever mosquito), this protein is 3,4-dihydroxyphenylacetaldehyde synthase.